Reading from the N-terminus, the 455-residue chain is Bifunctional protein GlmU (455 aa).

The interval 1–226 is pyrophosphorylase; sequence MSLEIVILAA…AMEVQGANDR (226 aa). UDP-N-acetyl-alpha-D-glucosamine contacts are provided by residues 8-11, Lys22, Gln73, 78-79, 99-101, Gly136, Glu151, Asn166, and Asn224; these read LAAG, GT, and YGD. Asp101 contributes to the Mg(2+) binding site. Residue Asn224 coordinates Mg(2+). Residues 227 to 247 form a linker region; that stretch reads KQLAELERHYQLRAGRRLMAQ. The segment at 248–455 is N-acetyltransferase; the sequence is GVTLRDPARF…WKRPEKIKKD (208 aa). Residues Arg330 and Lys348 each coordinate UDP-N-acetyl-alpha-D-glucosamine. The Proton acceptor role is filled by His360. UDP-N-acetyl-alpha-D-glucosamine is bound by residues Tyr363 and Asn374. Acetyl-CoA is bound by residues Ala377, 383 to 384, Ser402, Ala420, and Arg437; that span reads NY.

It in the N-terminal section; belongs to the N-acetylglucosamine-1-phosphate uridyltransferase family. In the C-terminal section; belongs to the transferase hexapeptide repeat family. Homotrimer. Mg(2+) is required as a cofactor.

The protein resides in the cytoplasm. It catalyses the reaction alpha-D-glucosamine 1-phosphate + acetyl-CoA = N-acetyl-alpha-D-glucosamine 1-phosphate + CoA + H(+). The catalysed reaction is N-acetyl-alpha-D-glucosamine 1-phosphate + UTP + H(+) = UDP-N-acetyl-alpha-D-glucosamine + diphosphate. The protein operates within nucleotide-sugar biosynthesis; UDP-N-acetyl-alpha-D-glucosamine biosynthesis; N-acetyl-alpha-D-glucosamine 1-phosphate from alpha-D-glucosamine 6-phosphate (route II): step 2/2. It functions in the pathway nucleotide-sugar biosynthesis; UDP-N-acetyl-alpha-D-glucosamine biosynthesis; UDP-N-acetyl-alpha-D-glucosamine from N-acetyl-alpha-D-glucosamine 1-phosphate: step 1/1. Its pathway is bacterial outer membrane biogenesis; LPS lipid A biosynthesis. Its function is as follows. Catalyzes the last two sequential reactions in the de novo biosynthetic pathway for UDP-N-acetylglucosamine (UDP-GlcNAc). The C-terminal domain catalyzes the transfer of acetyl group from acetyl coenzyme A to glucosamine-1-phosphate (GlcN-1-P) to produce N-acetylglucosamine-1-phosphate (GlcNAc-1-P), which is converted into UDP-GlcNAc by the transfer of uridine 5-monophosphate (from uridine 5-triphosphate), a reaction catalyzed by the N-terminal domain. This Pseudomonas fluorescens (strain ATCC BAA-477 / NRRL B-23932 / Pf-5) protein is Bifunctional protein GlmU.